Consider the following 207-residue polypeptide: Holliday junction resolvase RecU (207 aa).

The interval 1–21 (MTIRYPNGQVYRQPGPTKSKS) is disordered. Mg(2+) contacts are provided by Thr87, Asp89, Glu102, and Gln121.

Belongs to the RecU family. The cofactor is Mg(2+).

The protein localises to the cytoplasm. It carries out the reaction Endonucleolytic cleavage at a junction such as a reciprocal single-stranded crossover between two homologous DNA duplexes (Holliday junction).. Its function is as follows. Endonuclease that resolves Holliday junction intermediates in genetic recombination. Cleaves mobile four-strand junctions by introducing symmetrical nicks in paired strands. Promotes annealing of linear ssDNA with homologous dsDNA. Required for DNA repair, homologous recombination and chromosome segregation. In Lactiplantibacillus plantarum (strain ATCC BAA-793 / NCIMB 8826 / WCFS1) (Lactobacillus plantarum), this protein is Holliday junction resolvase RecU.